A 392-amino-acid chain; its full sequence is G2/mitotic-specific cyclin-B2 (392 aa).

Belongs to the cyclin family. Cyclin AB subfamily. As to quaternary structure, interacts with the CDK1 protein kinase to form a serine/threonine kinase holoenzyme complex also known as maturation promoting factor (MPF). The cyclin subunit imparts substrate specificity to the complex.

Functionally, essential for the control of the cell cycle at the G2/M (mitosis) transition. The chain is G2/mitotic-specific cyclin-B2 (CCNB2) from Rana japonica (Japanese reddish frog).